The primary structure comprises 150 residues: NmrA-like family domain-containing protein 1 (150 aa).

NADP(+)-binding positions include 7–12 (GATGAQ), 33–37 (RNPEQ), and lysine 71.

Belongs to the NmrA-type oxidoreductase family. In terms of assembly, homodimer. Interacts with ASS1. Interaction is enhanced by low NADPH/NADP(+) ratios, which results in inhibition of ASS1 activity.

Its subcellular location is the cytoplasm. It localises to the perinuclear region. The protein resides in the nucleus. Its function is as follows. Redox sensor protein. Undergoes restructuring and subcellular redistribution in response to changes in intracellular NADPH/NADP(+) levels. At low NADPH concentrations the protein is found mainly as a monomer, and binds argininosuccinate synthase (ASS1), the enzyme involved in nitric oxide synthesis. Association with ASS1 impairs its activity and reduces the production of nitric oxide, which subsecuently prevents apoptosis. Under normal NADPH concentrations, the protein is found as a dimer and hides the binding site for ASS1. The homodimer binds one molecule of NADPH. Has higher affinity for NADPH than for NADP(+). Binding to NADPH is necessary to form a stable dimer. This Rattus norvegicus (Rat) protein is NmrA-like family domain-containing protein 1.